The chain runs to 312 residues: Glyoxylate/hydroxypyruvate reductase A (312 aa).

R227 is a catalytic residue. Catalysis depends on H275, which acts as the Proton donor.

It belongs to the D-isomer specific 2-hydroxyacid dehydrogenase family. GhrA subfamily.

It is found in the cytoplasm. The enzyme catalyses glycolate + NADP(+) = glyoxylate + NADPH + H(+). It carries out the reaction (R)-glycerate + NAD(+) = 3-hydroxypyruvate + NADH + H(+). The catalysed reaction is (R)-glycerate + NADP(+) = 3-hydroxypyruvate + NADPH + H(+). Functionally, catalyzes the NADPH-dependent reduction of glyoxylate and hydroxypyruvate into glycolate and glycerate, respectively. The chain is Glyoxylate/hydroxypyruvate reductase A from Salmonella typhi.